The following is a 312-amino-acid chain: Olfactory receptor 4F3/4F16/4F29 (312 aa).

At 1 to 25 (MDGENHSVVSEFLFLGLTHSWEIQL) the chain is on the extracellular side. N-linked (GlcNAc...) asparagine glycosylation occurs at Asn-5. A helical membrane pass occupies residues 26–49 (LLLVFSSVLYVASITGNILIVFSV). At 50–57 (TTDPHLHS) the chain is on the cytoplasmic side. A helical membrane pass occupies residues 58–79 (PMYFLLASLSFIDLGACSVTSP). Topologically, residues 80–100 (KMIYDLFRKRKVISFGGCIAQ) are extracellular. Cys-97 and Cys-189 are oxidised to a cystine. A helical transmembrane segment spans residues 101 to 120 (IFFIHVVGGVEMVLLIAMAF). The Cytoplasmic portion of the chain corresponds to 121–139 (DRYVALCKPLHYLTIMSPR). A helical transmembrane segment spans residues 140-158 (MCLSFLAVAWTLGVSHSLF). At 159 to 195 (QLAFLVNLAFCGPNVLDSFYCDLPRLLRLACTDTYRL) the chain is on the extracellular side. A helical transmembrane segment spans residues 196-219 (QFMVTVNSGFICVGTFFILLISYV). Residues 220–235 (FILFTVWKHSSGGSSK) lie on the Cytoplasmic side of the membrane. The helical transmembrane segment at 236–258 (ALSTLSAHSTVVLLFFGPPMFVY) threads the bilayer. Residues 259 to 269 (TRPHPNSQMDK) lie on the Extracellular side of the membrane. The chain crosses the membrane as a helical span at residues 270–289 (FLAIFDAVLTPFLNPVVYTF). The Cytoplasmic segment spans residues 290 to 312 (RNKEMKAAIKRVCKQLVIYKRIS).

Belongs to the G-protein coupled receptor 1 family.

It localises to the cell membrane. Its function is as follows. Odorant receptor. This chain is Olfactory receptor 4F3/4F16/4F29 (OR4F3), found in Homo sapiens (Human).